A 407-amino-acid chain; its full sequence is Phosphopentomutase (407 aa).

Residues D10, D306, H311, D347, H348, and H359 each coordinate Mn(2+).

This sequence belongs to the phosphopentomutase family. The cofactor is Mn(2+).

Its subcellular location is the cytoplasm. The catalysed reaction is 2-deoxy-alpha-D-ribose 1-phosphate = 2-deoxy-D-ribose 5-phosphate. The enzyme catalyses alpha-D-ribose 1-phosphate = D-ribose 5-phosphate. It functions in the pathway carbohydrate degradation; 2-deoxy-D-ribose 1-phosphate degradation; D-glyceraldehyde 3-phosphate and acetaldehyde from 2-deoxy-alpha-D-ribose 1-phosphate: step 1/2. Functionally, isomerase that catalyzes the conversion of deoxy-ribose 1-phosphate (dRib-1-P) and ribose 1-phosphate (Rib-1-P) to deoxy-ribose 5-phosphate (dRib-5-P) and ribose 5-phosphate (Rib-5-P), respectively. In Salmonella paratyphi A (strain AKU_12601), this protein is Phosphopentomutase.